The primary structure comprises 271 residues: Undecaprenyl-diphosphatase (271 aa).

The next 8 membrane-spanning stretches (helical) occupy residues 5–25, 45–65, 86–106, 114–134, 149–169, 189–209, 226–246, and 251–271; these read YALFVAFVLGIVEGLTEFLPV, AATFEVVIQMGSILAVVAVFW, TLSLVHIILGMLPAVIIGLAI, LFGPQTVMYALVAGGILLIIA, ISYKQALGIGLFQCLALWPGF, AAEFSFILAVPMMVAASGLDL, VGFITAFVVAMIAIKTFLALI, and FIPFAIYRFVVAFAVYLVFVA.

This sequence belongs to the UppP family.

The protein localises to the cell inner membrane. The enzyme catalyses di-trans,octa-cis-undecaprenyl diphosphate + H2O = di-trans,octa-cis-undecaprenyl phosphate + phosphate + H(+). In terms of biological role, catalyzes the dephosphorylation of undecaprenyl diphosphate (UPP). Confers resistance to bacitracin. This Aeromonas hydrophila subsp. hydrophila (strain ATCC 7966 / DSM 30187 / BCRC 13018 / CCUG 14551 / JCM 1027 / KCTC 2358 / NCIMB 9240 / NCTC 8049) protein is Undecaprenyl-diphosphatase.